The sequence spans 172 residues: Hemagglutinin/amebocyte aggregation factor (172 aa).

The N-terminal stretch at 1–19 (MNSPAIVIIIFSTLTFSEA) is a signal peptide. 4 consecutive repeat copies span residues 21-25 (VNDWD), 50-54 (EDRRW), 73-77 (VNDWD), and 102-106 (EDRRW). Disulfide bonds link Cys-32/Cys-58, Cys-67/Cys-172, Cys-84/Cys-110, Cys-111/Cys-117, and Cys-123/Cys-167. Repeat copies occupy residues 129 to 133 (VNSWD) and 158 to 162 (EDRRW).

This sequence belongs to the dermatopontin family.

It is found in the secreted. Functionally, possesses the property of inducing both aggregation of amebocytes and agglutination of erythrocytes. The polypeptide is Hemagglutinin/amebocyte aggregation factor (Limulus polyphemus (Atlantic horseshoe crab)).